The sequence spans 216 residues: MNLVGSYAHHHHHHHSHPPHPMLHEPFLFGPASRCHQERPYFQSWLLSPADAAPDFPAGGPPPTTAVAAAAYGPDARPSQSPGRLEALGSRLPKRKGSGPKKERRRTESINSAFAELRECIPNVPADTKLSKIKTLRLATSYIAYLMDVLAKDAQAGDPEAFKAELKKTDGGRESKRKRELPQQPESFPPASGPGEKRIKGRTGWPQQVWALELNQ.

Disordered regions lie at residues 1–20 (MNLV…HPPH), 53–109 (APDF…RTES), and 165–203 (ELKK…KGRT). The span at 8 to 18 (AHHHHHHHSHP) shows a compositional bias: basic residues. A compositionally biased stretch (low complexity) spans 65 to 78 (TAVAAAAYGPDARP). The span at 92–104 (LPKRKGSGPKKER) shows a compositional bias: basic residues. A bHLH domain is found at 94–146 (KRKGSGPKKERRRTESINSAFAELRECIPNVPADTKLSKIKTLRLATSYIAYL). Residue T107 is modified to Phosphothreonine; by PLK4. Residue S109 is modified to Phosphoserine; by PLK4. Basic and acidic residues predominate over residues 165–174 (ELKKTDGGRE).

Efficient DNA binding requires dimerization with another bHLH protein. Forms homodimers and heterodimers with TCF3 gene products E12 and E47, HAND2 and HEY1, HEY2 and HEYL (hairy-related transcription factors). Interacts with MDFIC. Interacts with SOX15; the interaction enhances HAND1-induced differentiation of trophoblast giant cells. Phosphorylation by PLK4 disrupts the interaction with MDFIC and leads to translocation into the nucleoplasm, allowing dimerization and transcription factor activity. Smooth muscle cells of the gut and adrenal tissue.

Its subcellular location is the nucleus. It localises to the nucleoplasm. The protein localises to the nucleolus. In terms of biological role, transcription factor that plays an essential role in both trophoblast giant cell differentiation and in cardiac morphogenesis. Binds the DNA sequence 5'-NRTCTG-3' (non-canonical E-box). Acts as a transcriptional repressor of SOX15. In the adult, could be required for ongoing expression of cardiac-specific genes. In Mus musculus (Mouse), this protein is Heart- and neural crest derivatives-expressed protein 1 (Hand1).